The chain runs to 317 residues: Flagellar hook-associated protein 3 (317 aa).

This sequence belongs to the bacterial flagellin family.

Its subcellular location is the secreted. It localises to the bacterial flagellum. The sequence is that of Flagellar hook-associated protein 3 (flgL) from Escherichia coli (strain K12).